Reading from the N-terminus, the 89-residue chain is MEIPKLLYIAVIAIGLSGSLTCATPLANPWADPEAEANPKAKATAEATAEAIAEALAEPEPALPALPLLAFLFSLPAVQHWIEKNWING.

Residues 1-23 (MEIPKLLYIAVIAIGLSGSLTCA) form the signal peptide. Positions 24 to 61 (TPLANPWADPEAEANPKAKATAEATAEAIAEALAEPEP) are excised as a propeptide. At asparagine 88 the chain carries Asparagine amide.

Belongs to the formicidae venom clade 1 family. As to expression, expressed by the venom gland.

It is found in the secreted. Vertebrate-selective toxin that causes pain by targeting voltage-gated sodium channels. The protein is Myrmicitoxin(1)-Pr2c of Pogonomyrmex rugosus (Desert harvester ant).